A 596-amino-acid chain; its full sequence is Ulvan-active sulfatase (596 aa).

A signal peptide spans 1 to 27 (MLFLRFKFFNNRLLFVSVLCFVICVSC). Residues E58, D59, C97, D306, and H307 each contribute to the Ca(2+) site. Catalysis depends on C97, which acts as the Nucleophile. At C97 the chain carries 3-oxoalanine (Cys).

The protein belongs to the sulfatase family. It depends on Ca(2+) as a cofactor. Post-translationally, the conversion to 3-oxoalanine (also known as C-formylglycine, FGly), of a serine or cysteine residue in prokaryotes and of a cysteine residue in eukaryotes, is critical for catalytic activity.

It localises to the periplasm. Sulfatase involved in ulvan degradation. Ulvan is the main polysaccharide component of the Ulvales (green seaweed) cell wall. It is composed of disaccharide building blocks comprising 3-sulfated rhamnose (Rha3S) linked to D-glucuronic acid (GlcA), L-iduronic acid (IduA), or D-xylose (Xyl). The sulfatase desulfates Xyl2S-Rha3S, product of the degradation of ulvan by endo-acting alpha-1,4-L-rhamnosidase, to Xyl-Rha3S. This Formosa agariphila (strain DSM 15362 / KCTC 12365 / LMG 23005 / KMM 3901 / M-2Alg 35-1) protein is Ulvan-active sulfatase.